Here is a 403-residue protein sequence, read N- to C-terminus: Flavohemoprotein (403 aa).

The Globin domain maps to M1 to S138. H85 contacts heme b. Residues Y95 and E137 each act as charge relay system in the active site. The tract at residues G149–E403 is reductase. The region spanning K152 to D262 is the FAD-binding FR-type domain. FAD-binding positions include Y190 and R206 to S209. Position 275-280 (G275–P280) interacts with NADP(+). V395–P398 contacts FAD.

It belongs to the globin family. Two-domain flavohemoproteins subfamily. In the C-terminal section; belongs to the flavoprotein pyridine nucleotide cytochrome reductase family. In terms of assembly, monomer. Requires FAD as cofactor. Heme b is required as a cofactor.

The protein resides in the cytoplasm. It carries out the reaction 2 nitric oxide + NADPH + 2 O2 = 2 nitrate + NADP(+) + H(+). The enzyme catalyses 2 nitric oxide + NADH + 2 O2 = 2 nitrate + NAD(+) + H(+). In terms of biological role, is involved in NO detoxification in an aerobic process, termed nitric oxide dioxygenase (NOD) reaction that utilizes O(2) and NAD(P)H to convert NO to nitrate, which protects the bacterium from various noxious nitrogen compounds. Therefore, plays a central role in the inducible response to nitrosative stress. In the presence of oxygen and NADH, FHP has NADH oxidase activity, which leads to the generation of superoxide and H(2)O(2), both in vitro and in vivo, and it has been suggested that FHP might act as an amplifier of superoxide stress. Under anaerobic conditions, FHP also exhibits nitric oxide reductase and FAD reductase activities. However, all these reactions are much lower than NOD activity. The protein is Flavohemoprotein (hmp) of Cupriavidus necator (strain ATCC 17699 / DSM 428 / KCTC 22496 / NCIMB 10442 / H16 / Stanier 337) (Ralstonia eutropha).